A 489-amino-acid chain; its full sequence is Ecdysteroid UDP-glucosyltransferase (489 aa).

A signal peptide spans 1–17; it reads MVFLIIALTLLATGARA.

The protein belongs to the UDP-glycosyltransferase family.

Its function is as follows. Catalyzes the transfer of glucose from UDP-glucose to ecdysteroids which are insect molting hormones. Expression of egt interferes with normal insect development and block molting. This chain is Ecdysteroid UDP-glucosyltransferase (EGT), found in Orgyia pseudotsugata (Douglas-fir tussock moth).